Consider the following 2176-residue polypeptide: Nipped-B-like protein scc-2 (2176 aa).

Over residues 1–25 (MDPNNLQNSLNGTGNPNFQPVQTNA) the composition is skewed to polar residues. 7 disordered regions span residues 1–27 (MDPN…NAGG), 150–170 (PIPQ…QIQS), 464–483 (SEAT…DEEG), 495–514 (MMSV…NQRK), 523–551 (YDSL…DDED), 585–615 (QHFF…IESR), and 669–708 (DSLD…EMDE). The span at 464 to 473 (SEATQSSSVT) shows a compositional bias: low complexity. 2 stretches are compositionally biased toward basic and acidic residues: residues 597-615 (EDRI…IESR) and 685-695 (SGGDHHHKGDE). The segment covering 696–708 (NSDESDEEEEMDE) has biased composition (acidic residues). HEAT repeat units follow at residues 1280–1312 (DTYL…IIEA), 1320–1351 (EDVQ…FVLY), 1353–1388 (EEYV…ICEK), 1393–1426 (EMIP…LWFQ), 1692–1723 (EKVF…FCAQ), 1803–1834 (QKYW…TLNQ), and 1840–1871 (GASI…IDSK). The tract at residues 2149–2176 (ITAANDDYDEEEDGGEDSRGPIMEQMEH) is disordered. The span at 2154-2163 (DDYDEEEDGG) shows a compositional bias: acidic residues.

This sequence belongs to the SCC2/Nipped-B family. May heterodimerize with mau-2/SCC4 to form the cohesin loading complex.

The protein localises to the nucleus. The protein resides in the chromosome. Plays an important role in the loading of the cohesin complex on to meiotic chromosomes. Forms a heterodimeric complex (also known as cohesin loading complex) with mau-2/SCC4 which mediates the loading of the cohesin complex onto chromatin. Plays an essential role in cell division during embryonic development. Promotes normal chromosome organization during meiosis. Required for the assembly of the synaptonemal complex between homologous chromosomes to promote sister chromatid cohesion during meiosis. Required for chromosome segregation during mitosis and meiosis. Plays a role in DNA double-strand break (DSB) repair during meiotic recombination and promotes the assembly of the 9-1-1 cell-cycle checkpoint response complex which is required for inducing apoptosis in response to DNA damage, at DNA damage sites. The sequence is that of Nipped-B-like protein scc-2 from Caenorhabditis elegans.